Consider the following 732-residue polypeptide: E3 ubiquitin-protein ligase DCST1 (732 aa).

Over Met1–Pro46 the chain is Cytoplasmic. The helical transmembrane segment at His47–Trp67 threads the bilayer. Topologically, residues Arg68–Thr76 are extracellular. The helical transmembrane segment at Ala77–Val97 threads the bilayer. Over Asn98–Lys107 the chain is Cytoplasmic. The helical transmembrane segment at Val108–Ile128 threads the bilayer. The Extracellular segment spans residues Arg129 to Thr394. Residues Asn184, Asn217, Asn346, and Asn374 are each glycosylated (N-linked (GlcNAc...) asparagine). Residues Tyr395–Phe415 traverse the membrane as a helical segment. At His416–Thr489 the chain is on the cytoplasmic side. A helical transmembrane segment spans residues Leu490–Phe510. Over Asp511–Asp576 the chain is Extracellular. The N-linked (GlcNAc...) asparagine glycan is linked to Asn551. A helical transmembrane segment spans residues Tyr577–Gly597. The Cytoplasmic portion of the chain corresponds to Tyr598 to Asp732. Residues Cys672–Thr711 form an RING-type; degenerate zinc finger.

As to quaternary structure, interacts with STAT2; the interaction results in STAT2 'Lys-48'-linked ubiquitination leading to its proteasomal degradation. Interacts with DCST2. Expressed in testis.

Its subcellular location is the cell membrane. It is found in the cytoplasmic vesicle. The protein localises to the secretory vesicle. It localises to the acrosome membrane. The enzyme catalyses S-ubiquitinyl-[E2 ubiquitin-conjugating enzyme]-L-cysteine + [acceptor protein]-L-lysine = [E2 ubiquitin-conjugating enzyme]-L-cysteine + N(6)-ubiquitinyl-[acceptor protein]-L-lysine.. It functions in the pathway protein modification; protein ubiquitination. Its function is as follows. E3 ubiquitin-protein ligase which mediates 'Lys-48'-linked ubiquitination of STAT2 and induces its proteasomal degradation thereby negatively regulating type-I-interferon signaling. In terms of biological role, essential sperm cell-surface protein required for sperm-egg fusion and fertilization. The protein is E3 ubiquitin-protein ligase DCST1 (Dcst1) of Mus musculus (Mouse).